Consider the following 265-residue polypeptide: Phosphatidylglycerol--prolipoprotein diacylglyceryl transferase (265 aa).

4 helical membrane-spanning segments follow: residues 10–30 (VAIA…LIGI), 56–76 (LVFW…VLFY), 87–107 (LILQ…GVLL), and 117–137 (GKGF…GLGA). Arginine 139 provides a ligand contact to a 1,2-diacyl-sn-glycero-3-phospho-(1'-sn-glycerol). 3 helical membrane-spanning segments follow: residues 172–192 (PSQL…LWFY), 200–220 (MAVS…VEFV), and 227–247 (LGYL…PMIL).

This sequence belongs to the Lgt family.

The protein resides in the cell inner membrane. The enzyme catalyses L-cysteinyl-[prolipoprotein] + a 1,2-diacyl-sn-glycero-3-phospho-(1'-sn-glycerol) = an S-1,2-diacyl-sn-glyceryl-L-cysteinyl-[prolipoprotein] + sn-glycerol 1-phosphate + H(+). Its pathway is protein modification; lipoprotein biosynthesis (diacylglyceryl transfer). In terms of biological role, catalyzes the transfer of the diacylglyceryl group from phosphatidylglycerol to the sulfhydryl group of the N-terminal cysteine of a prolipoprotein, the first step in the formation of mature lipoproteins. In Azotobacter vinelandii (strain DJ / ATCC BAA-1303), this protein is Phosphatidylglycerol--prolipoprotein diacylglyceryl transferase.